A 284-amino-acid chain; its full sequence is Nucleotide-binding protein VSAL_I0495 (284 aa).

8–15 serves as a coordination point for ATP; it reads GNSGAGKS. A GTP-binding site is contributed by 56-59; the sequence is DIRN.

The protein belongs to the RapZ-like family.

Functionally, displays ATPase and GTPase activities. The polypeptide is Nucleotide-binding protein VSAL_I0495 (Aliivibrio salmonicida (strain LFI1238) (Vibrio salmonicida (strain LFI1238))).